Here is a 252-residue protein sequence, read N- to C-terminus: 4-hydroxy-tetrahydrodipicolinate reductase (252 aa).

NAD(+) contacts are provided by residues 8–13 (GCSGKM), 85–87 (CTT), and 109–112 (SANM). H142 serves as the catalytic Proton donor/acceptor. H143 serves as a coordination point for (S)-2,3,4,5-tetrahydrodipicolinate. The active-site Proton donor is K146. 152 to 153 (GT) serves as a coordination point for (S)-2,3,4,5-tetrahydrodipicolinate.

Belongs to the DapB family.

The protein resides in the cytoplasm. It catalyses the reaction (S)-2,3,4,5-tetrahydrodipicolinate + NAD(+) + H2O = (2S,4S)-4-hydroxy-2,3,4,5-tetrahydrodipicolinate + NADH + H(+). The enzyme catalyses (S)-2,3,4,5-tetrahydrodipicolinate + NADP(+) + H2O = (2S,4S)-4-hydroxy-2,3,4,5-tetrahydrodipicolinate + NADPH + H(+). Its pathway is amino-acid biosynthesis; L-lysine biosynthesis via DAP pathway; (S)-tetrahydrodipicolinate from L-aspartate: step 4/4. In terms of biological role, catalyzes the conversion of 4-hydroxy-tetrahydrodipicolinate (HTPA) to tetrahydrodipicolinate. In Clostridium novyi (strain NT), this protein is 4-hydroxy-tetrahydrodipicolinate reductase.